The following is a 125-amino-acid chain: Small ribosomal subunit protein uS12 (125 aa).

A 3-methylthioaspartic acid modification is found at Asp-89.

It belongs to the universal ribosomal protein uS12 family. As to quaternary structure, part of the 30S ribosomal subunit. Contacts proteins S8 and S17. May interact with IF1 in the 30S initiation complex.

With S4 and S5 plays an important role in translational accuracy. Functionally, interacts with and stabilizes bases of the 16S rRNA that are involved in tRNA selection in the A site and with the mRNA backbone. Located at the interface of the 30S and 50S subunits, it traverses the body of the 30S subunit contacting proteins on the other side and probably holding the rRNA structure together. The combined cluster of proteins S8, S12 and S17 appears to hold together the shoulder and platform of the 30S subunit. In Cupriavidus metallidurans (strain ATCC 43123 / DSM 2839 / NBRC 102507 / CH34) (Ralstonia metallidurans), this protein is Small ribosomal subunit protein uS12.